A 441-amino-acid chain; its full sequence is MKAAVDLKPTLTIIKTEKVDIDLFPSPDMECADVPLLTPSSKEMMSQALKATFSGFAKEQQRLGIPKDPQQWTETHVRDWVMWAVNEFSLKGVDFQKFCMNGAALCALGKECFLELRPDFVGDILWEHLEILQKEEAKPYPANGVNAAYPESRYTSDYFISYGIEHAQCVPPSEFSEPSFITESYQTLHPISSEELLSLKYENDYPSVILRDPVQTDSLQTDYFTIKQEVVTPDNMCMGRASRGKLGGQDSFESIESYDSCDRLTQSWSSQSSFQSLQRVPSYDSFDSEDYPAALPNHKPKGTFKDYVRDRADMNKDKPVIPAAALAGYTGSGPIQLWQFLLELLTDKSCQSFISWTGDGWEFKLSDPDEVARRWGKRKNKPKMNYEKLSRGLRYYYDKNIIHKTAGKRYVYRFVCDLQSLLGYTPEELHAMLDVKPDADE.

Residues 51–136 (ATFSGFAKEQ…EHLEILQKEE (86 aa)) enclose the PNT domain. An activation domain; required for transcription activation region spans residues 130–243 (EILQKEEAKP…DNMCMGRASR (114 aa)). A helix HI-1 region spans residues 304 to 312 (FKDYVRDRA). Residues 323 to 330 (AAALAGYT) are helix HI-2. Positions 335 to 415 (IQLWQFLLEL…AGKRYVYRFV (81 aa)) form a DNA-binding region, ETS. The interval 418–422 (LQSLL) is helix H4. The tract at residues 426 to 432 (PEELHAM) is helix H5.

This sequence belongs to the ETS family. Binds DNA as a homodimer; homodimerization is required for transcription activation.

The protein resides in the nucleus. Its subcellular location is the cytoplasm. Its activity is regulated as follows. Autoinhibited by a module composed of four alpha helices (HI-1, HI-2, H4, and H5) that flank the DNA-binding ETS domain, reducing the affinity for DNA. Functionally, transcription factor. Directly controls the expression of cytokine and chemokine genes in a wide variety of different cellular contexts. This chain is Transforming protein p54/c-ets-1 (ETS1), found in Gallus gallus (Chicken).